Consider the following 462-residue polypeptide: Bifunctional dihydrofolate reductase-thymidylate synthase (462 aa).

One can recognise a DHFR domain in the interval 6–165 (TFSMVLAMTL…INYDYQHLIN (160 aa)). Valine 10 contacts substrate. NADP(+)-binding positions include alanine 12 and 18–24 (GIGYQNR). Residue aspartate 32 participates in substrate binding. NADP(+) is bound by residues 49 to 51 (RKT) and 68 to 71 (ISKN). A substrate-binding site is contributed by isoleucine 101. 102-109 (GGKRIFEE) is an NADP(+) binding site. Residue threonine 122 participates in substrate binding. The thymidylate synthase stretch occupies residues 180–462 (ENQYLDMITK…HDKIEMKMAV (283 aa)). Residue arginine 200 participates in dUMP binding. Residue cysteine 345 is part of the active site. DUMP-binding positions include histidine 346, 364–368 (QRSCD), asparagine 376, and 406–408 (HIY).

This sequence in the N-terminal section; belongs to the dihydrofolate reductase family. It in the C-terminal section; belongs to the thymidylate synthase family.

It catalyses the reaction (6S)-5,6,7,8-tetrahydrofolate + NADP(+) = 7,8-dihydrofolate + NADPH + H(+). It carries out the reaction dUMP + (6R)-5,10-methylene-5,6,7,8-tetrahydrofolate = 7,8-dihydrofolate + dTMP. It participates in cofactor biosynthesis; tetrahydrofolate biosynthesis; 5,6,7,8-tetrahydrofolate from 7,8-dihydrofolate: step 1/1. Its function is as follows. Bifunctional enzyme. Involved in de novo dTMP biosynthesis. Key enzyme in folate metabolism. Catalyzes an essential reaction for de novo glycine and purine synthesis, DNA precursor synthesis, and for the conversion of dUMP to dTMP. The sequence is that of Bifunctional dihydrofolate reductase-thymidylate synthase from Paramecium tetraurelia.